The primary structure comprises 260 residues: PHD finger protein ALFIN-LIKE 5 (260 aa).

Met1 carries the N-acetylmethionine modification. The interval 142 to 203 (AEKQTKEMPS…EEDEDEDEHG (62 aa)) is disordered. Residues 148 to 165 (EMPSSANQNGNRSKSNSK) show a composition bias toward polar residues. The span at 167 to 181 (RGLESKSSKTIHAKD) shows a compositional bias: basic and acidic residues. The span at 182 to 202 (EEEGLELEEGEEEEDEDEDEH) shows a compositional bias: acidic residues. The PHD-type zinc-finger motif lies at 204 to 256 (ETLCGACGDNYASDEFWICCDMCEKWFHGECVKITPARAEHIKHYKCPTCSNK).

Belongs to the Alfin family. As to quaternary structure, interacts with H3K4me3 and to a lesser extent with H3K4me2. As to expression, ubiquitously expressed.

It is found in the nucleus. In terms of biological role, histone-binding component that specifically recognizes H3 tails trimethylated on 'Lys-4' (H3K4me3), which mark transcription start sites of virtually all active genes. This Arabidopsis thaliana (Mouse-ear cress) protein is PHD finger protein ALFIN-LIKE 5 (AL5).